The chain runs to 269 residues: Tryptophan synthase alpha chain (269 aa).

Residues glutamate 49 and aspartate 60 each act as proton acceptor in the active site.

Belongs to the TrpA family. In terms of assembly, tetramer of two alpha and two beta chains.

It carries out the reaction (1S,2R)-1-C-(indol-3-yl)glycerol 3-phosphate + L-serine = D-glyceraldehyde 3-phosphate + L-tryptophan + H2O. It functions in the pathway amino-acid biosynthesis; L-tryptophan biosynthesis; L-tryptophan from chorismate: step 5/5. Its function is as follows. The alpha subunit is responsible for the aldol cleavage of indoleglycerol phosphate to indole and glyceraldehyde 3-phosphate. The sequence is that of Tryptophan synthase alpha chain from Histophilus somni (strain 2336) (Haemophilus somnus).